Reading from the N-terminus, the 484-residue chain is tRNA sulfurtransferase (484 aa).

Residues 63–167 (EAFAERLACI…NDNLYLIDKR (105 aa)) form the THUMP domain. Residues 185 to 186 (LI), Lys267, Gly289, and Gln298 contribute to the ATP site. Cys346 and Cys458 are disulfide-bonded. The Rhodanese domain occupies 406 to 484 (ISAGEIIIDV…GYNNVKVYRP (79 aa)). The Cysteine persulfide intermediate role is filled by Cys458.

This sequence belongs to the ThiI family.

The protein localises to the cytoplasm. The enzyme catalyses [ThiI sulfur-carrier protein]-S-sulfanyl-L-cysteine + a uridine in tRNA + 2 reduced [2Fe-2S]-[ferredoxin] + ATP + H(+) = [ThiI sulfur-carrier protein]-L-cysteine + a 4-thiouridine in tRNA + 2 oxidized [2Fe-2S]-[ferredoxin] + AMP + diphosphate. The catalysed reaction is [ThiS sulfur-carrier protein]-C-terminal Gly-Gly-AMP + S-sulfanyl-L-cysteinyl-[cysteine desulfurase] + AH2 = [ThiS sulfur-carrier protein]-C-terminal-Gly-aminoethanethioate + L-cysteinyl-[cysteine desulfurase] + A + AMP + 2 H(+). Its pathway is cofactor biosynthesis; thiamine diphosphate biosynthesis. In terms of biological role, catalyzes the ATP-dependent transfer of a sulfur to tRNA to produce 4-thiouridine in position 8 of tRNAs, which functions as a near-UV photosensor. Also catalyzes the transfer of sulfur to the sulfur carrier protein ThiS, forming ThiS-thiocarboxylate. This is a step in the synthesis of thiazole, in the thiamine biosynthesis pathway. The sulfur is donated as persulfide by IscS. This is tRNA sulfurtransferase from Shewanella pealeana (strain ATCC 700345 / ANG-SQ1).